Consider the following 308-residue polypeptide: Porphobilinogen deaminase (308 aa).

Cysteine 241 carries the post-translational modification S-(dipyrrolylmethanemethyl)cysteine.

The protein belongs to the HMBS family. As to quaternary structure, monomer. Requires dipyrromethane as cofactor.

The enzyme catalyses 4 porphobilinogen + H2O = hydroxymethylbilane + 4 NH4(+). Its pathway is porphyrin-containing compound metabolism; protoporphyrin-IX biosynthesis; coproporphyrinogen-III from 5-aminolevulinate: step 2/4. Its function is as follows. Tetrapolymerization of the monopyrrole PBG into the hydroxymethylbilane pre-uroporphyrinogen in several discrete steps. The chain is Porphobilinogen deaminase from Staphylococcus aureus (strain bovine RF122 / ET3-1).